We begin with the raw amino-acid sequence, 419 residues long: Tol-Pal system protein TolB (419 aa).

The N-terminal stretch at 1-19 (MCNRIISLFLLLFTGQVIA) is a signal peptide.

Belongs to the TolB family. The Tol-Pal system is composed of five core proteins: the inner membrane proteins TolA, TolQ and TolR, the periplasmic protein TolB and the outer membrane protein Pal. They form a network linking the inner and outer membranes and the peptidoglycan layer.

The protein localises to the periplasm. Functionally, part of the Tol-Pal system, which plays a role in outer membrane invagination during cell division and is important for maintaining outer membrane integrity. The polypeptide is Tol-Pal system protein TolB (Legionella pneumophila (strain Paris)).